A 119-amino-acid polypeptide reads, in one-letter code: Probable non-functional T cell receptor gamma variable 10 (119 aa).

A signal peptide spans 1–19; it reads MSLLEAFAFSSWALGLGLS. An Ig-like domain is found at 24–119; the sequence is FQLSISTEVK…MAVYYCAAWD (96 aa). A disulfide bridge links Cys-40 with Cys-115.

In terms of assembly, gamma-delta TR is a heterodimer composed of a gamma and delta chain; disulfide-linked. The gamma-delta TR is associated with the transmembrane signaling CD3 coreceptor proteins following the stoichiometry: a single gamma-delta TR heterodimer associates with one CD3D-CD3E heterodimer, one CD3G-CD3E heterodimer and one CD247 homodimer forming a stable octameric structure. Upon activation, gamma-delta TR complex associates with FCER1G to initiate intracellular signaling.

The protein resides in the cell membrane. In terms of biological role, probable non-functional open reading frame (ORF) of V region of the variable domain of T cell receptor (TR) gamma chain. Non-functional ORF generally cannot participate in the synthesis of a productive T cell receptor (TR) chain due to altered V-(D)-J or switch recombination and/or splicing site (at mRNA level) and/or conserved amino acid change (protein level). Gamma-delta TRs recognize a variety of self and foreign non-peptide antigens frequently expressed at the epithelial boundaries between the host and external environment, including endogenous lipids presented by MH-like protein CD1D and phosphoantigens presented by butyrophilin-like molecule BTN3A1. Upon antigen recognition induces rapid, innate-like immune responses involved in pathogen clearance and tissue repair. Binding of gamma-delta TR complex to antigen triggers phosphorylation of immunoreceptor tyrosine-based activation motifs (ITAMs) in the CD3 chains by the LCK and FYN kinases, allowing the recruitment, phosphorylation, and activation of ZAP70 that facilitates phosphorylation of the scaffolding proteins LCP2 and LAT. This lead to the formation of a supramolecular signalosome that recruits the phospholipase PLCG1, resulting in calcium mobilization and ERK activation, ultimately leading to T cell expansion and differentiation into effector cells. Gamma-delta TRs are produced through somatic rearrangement of a limited repertoire of variable (V), diversity (D), and joining (J) genes. The potential diversity of gamma-delta TRs is conferred by the unique ability to rearrange (D) genes in tandem and to utilize all three reading frames. The combinatorial diversity is considerably increased by the sequence exonuclease trimming and random nucleotide (N) region additions which occur during the V-(D)-J rearrangements. The sequence is that of Probable non-functional T cell receptor gamma variable 10 from Homo sapiens (Human).